The primary structure comprises 124 residues: Glutaredoxin-2 (124 aa).

Residues C13 and C16 are joined by a disulfide bond.

It belongs to the glutaredoxin family. As to quaternary structure, homodimer.

The protein resides in the host cytoplasm. In terms of biological role, glutaredoxin necessary for virion morphogenesis and virus replication. Functions as a thiol-disulfide transfer protein between membrane-associated OPG128 and substrates OPG095 or OPG053. The complete pathway for formation of disulfide bonds in intracellular virion membrane proteins sequentially involves oxidation of OPG072, OPG128 and OPG088. Exhibit thioltransferase and dehydroascorbate reductase activities in vitro. The protein is Glutaredoxin-2 (OPG088) of Oryctolagus cuniculus (Rabbit).